The following is a 446-amino-acid chain: Exodeoxyribonuclease 7 large subunit (446 aa).

Belongs to the XseA family. As to quaternary structure, heterooligomer composed of large and small subunits.

It localises to the cytoplasm. It carries out the reaction Exonucleolytic cleavage in either 5'- to 3'- or 3'- to 5'-direction to yield nucleoside 5'-phosphates.. Functionally, bidirectionally degrades single-stranded DNA into large acid-insoluble oligonucleotides, which are then degraded further into small acid-soluble oligonucleotides. The chain is Exodeoxyribonuclease 7 large subunit from Vibrio cholerae serotype O1 (strain ATCC 39541 / Classical Ogawa 395 / O395).